The chain runs to 599 residues: Tryptophan 2-C-methyltransferase (599 aa).

A B12-binding domain is found at 4–149; it reads KGTVALINPN…RALAEGRSAD (146 aa). The tract at residues 167–197 is disordered; sequence RVAPPALDPRAAPAPSSSPSPSPAPSSSSAP. The span at 168-181 shows a compositional bias: low complexity; the sequence is VAPPALDPRAAPAP. The region spanning 239 to 492 is the Radical SAM core domain; it reads YREGGLGSIL…IEYERQFMFD (254 aa). Residues Cys-253, Cys-257, and Cys-260 each coordinate [4Fe-4S] cluster.

The cofactor is [4Fe-4S] cluster. Requires cob(II)alamin as cofactor.

It carries out the reaction L-tryptophan + S-adenosyl-L-methionine = 2-methyl-L-tryptophan + S-adenosyl-L-homocysteine + H(+). Its function is as follows. Involved in the biosynthetic pathway of the antibiotic thiostrepton A. First, TsrM catalyzes the transfer of a methyl group from S-adenosyl methionine (SAM) to cobalamin, leading to the formation of methylcobalamin (CH3-cobalamin) and S-adenosyl-L-homocysteine (SAH). Then the methyl group is transferred to the C2 position of tryptophan (Trp) with the concerted action of the radical SAM [4Fe-4S] center, leading to the production of methyltryptophan. This is Tryptophan 2-C-methyltransferase from Streptomyces laurentii.